A 118-amino-acid chain; its full sequence is uncharacterized protein (118 aa).

This is an uncharacterized protein from Methanocaldococcus jannaschii (strain ATCC 43067 / DSM 2661 / JAL-1 / JCM 10045 / NBRC 100440) (Methanococcus jannaschii).